A 2298-amino-acid chain; its full sequence is Protein Ycf2 (2298 aa).

1638–1645 contributes to the ATP binding site; that stretch reads GSIGTGRS.

The protein belongs to the Ycf2 family.

Its subcellular location is the plastid. The protein resides in the chloroplast stroma. Functionally, probable ATPase of unknown function. Its presence in a non-photosynthetic plant (Epifagus virginiana) and experiments in tobacco indicate that it has an essential function which is probably not related to photosynthesis. The sequence is that of Protein Ycf2 from Gossypium barbadense (Sea Island cotton).